A 146-amino-acid polypeptide reads, in one-letter code: Small ribosomal subunit protein uS5 (146 aa).

The region spanning 8 to 71 (FEEVIVNIGR…DDAFKNIIDV (64 aa)) is the S5 DRBM domain.

It belongs to the universal ribosomal protein uS5 family. In terms of assembly, part of the 30S ribosomal subunit. Contacts proteins S4 and S8.

In terms of biological role, with S4 and S12 plays an important role in translational accuracy. Located at the back of the 30S subunit body where it stabilizes the conformation of the head with respect to the body. This chain is Small ribosomal subunit protein uS5, found in Campylobacter hominis (strain ATCC BAA-381 / DSM 21671 / CCUG 45161 / LMG 19568 / NCTC 13146 / CH001A).